The primary structure comprises 113 residues: U11-theraphotoxin-Hhn1a (113 aa).

The first 21 residues, 1-21, serve as a signal peptide directing secretion; it reads MNTVRVTFLLVFVLAVSLGQA. Positions 22–74 are excised as a propeptide; the sequence is DKDENRMEMQGKTEQGKSYLDFAENLLLQKLEELEAKLLEEDSEESRNSRQKR. 3 disulfide bridges follow: Cys-75–Cys-90, Cys-82–Cys-95, and Cys-89–Cys-110.

The protein belongs to the neurotoxin 14 (magi-1) family. 01 (HNTX-16) subfamily. As to expression, expressed by the venom gland.

Its subcellular location is the secreted. In terms of biological role, probable ion channel inhibitor. This Cyriopagopus hainanus (Chinese bird spider) protein is U11-theraphotoxin-Hhn1a.